The chain runs to 412 residues: Shaggy-related protein kinase zeta (412 aa).

Residues 1–19 (MTSIPLGPPQPPSLAPQPP) show a composition bias toward pro residues. The interval 1-33 (MTSIPLGPPQPPSLAPQPPHLHGGDSLKRRPDI) is disordered. Over residues 22–33 (HGGDSLKRRPDI) the composition is skewed to basic and acidic residues. Ser26 carries the post-translational modification Phosphoserine. A Protein kinase domain is found at 72–356 (YMAERVVGTG…ALEACAHPFF (285 aa)). Residues 78–86 (VGTGSFGIV) and Lys101 contribute to the ATP site. Ser127 carries the post-translational modification Phosphoserine. 2 positions are modified to phosphothreonine: Thr136 and Thr137. Asp197 (proton acceptor) is an active-site residue. Phosphoserine is present on Ser219. Phosphotyrosine is present on Tyr232. Position 252 is a phosphoserine (Ser252). A Phosphothreonine modification is found at Thr293. Ser342 bears the Phosphoserine mark. Thr346 is subject to Phosphothreonine.

The protein belongs to the protein kinase superfamily. CMGC Ser/Thr protein kinase family. GSK-3 subfamily. Binds to KIB1. Interacts with beet curly top virus AL4/C4 and tomato golden mosaic virus AL4/AC4. Autophosphorylated mainly on threonine and serine residues.

The catalysed reaction is L-seryl-[protein] + ATP = O-phospho-L-seryl-[protein] + ADP + H(+). It catalyses the reaction L-threonyl-[protein] + ATP = O-phospho-L-threonyl-[protein] + ADP + H(+). Its function is as follows. May mediate extracellular signals to regulate transcription in differentiating cells. The polypeptide is Shaggy-related protein kinase zeta (ASK6) (Arabidopsis thaliana (Mouse-ear cress)).